A 143-amino-acid chain; its full sequence is Putative pre-16S rRNA nuclease (143 aa).

The protein belongs to the YqgF nuclease family.

The protein resides in the cytoplasm. Its function is as follows. Could be a nuclease involved in processing of the 5'-end of pre-16S rRNA. This is Putative pre-16S rRNA nuclease from Crocosphaera subtropica (strain ATCC 51142 / BH68) (Cyanothece sp. (strain ATCC 51142)).